A 300-amino-acid polypeptide reads, in one-letter code: Ribosomal protein L11 methyltransferase (300 aa).

T147, G168, D190, and N236 together coordinate S-adenosyl-L-methionine.

It belongs to the methyltransferase superfamily. PrmA family.

It is found in the cytoplasm. It carries out the reaction L-lysyl-[protein] + 3 S-adenosyl-L-methionine = N(6),N(6),N(6)-trimethyl-L-lysyl-[protein] + 3 S-adenosyl-L-homocysteine + 3 H(+). In terms of biological role, methylates ribosomal protein L11. In Leptospira interrogans serogroup Icterohaemorrhagiae serovar Lai (strain 56601), this protein is Ribosomal protein L11 methyltransferase.